The sequence spans 234 residues: Leucyl/phenylalanyl-tRNA--protein transferase (234 aa).

The protein belongs to the L/F-transferase family.

The protein localises to the cytoplasm. The enzyme catalyses N-terminal L-lysyl-[protein] + L-leucyl-tRNA(Leu) = N-terminal L-leucyl-L-lysyl-[protein] + tRNA(Leu) + H(+). The catalysed reaction is N-terminal L-arginyl-[protein] + L-leucyl-tRNA(Leu) = N-terminal L-leucyl-L-arginyl-[protein] + tRNA(Leu) + H(+). It carries out the reaction L-phenylalanyl-tRNA(Phe) + an N-terminal L-alpha-aminoacyl-[protein] = an N-terminal L-phenylalanyl-L-alpha-aminoacyl-[protein] + tRNA(Phe). Functionally, functions in the N-end rule pathway of protein degradation where it conjugates Leu, Phe and, less efficiently, Met from aminoacyl-tRNAs to the N-termini of proteins containing an N-terminal arginine or lysine. This Enterobacter sp. (strain 638) protein is Leucyl/phenylalanyl-tRNA--protein transferase.